The following is a 248-amino-acid chain: Putative glutamine amidotransferase-like protein C13C5.04 (248 aa).

Residues 13-217 (PMVEITSAYG…VKVLRGTEVF (205 aa)) form the Glutamine amidotransferase type-1 domain.

The protein is Putative glutamine amidotransferase-like protein C13C5.04 of Schizosaccharomyces pombe (strain 972 / ATCC 24843) (Fission yeast).